Consider the following 382-residue polypeptide: Secreted triacylglycerol lipase LIP5 (382 aa).

Cys-40 and Cys-211 are disulfide-bonded. Asn-115 carries N-linked (GlcNAc...) asparagine glycosylation. Ser-124 (nucleophile) is an active-site residue. Residues Asn-157 and Asn-232 are each glycosylated (N-linked (GlcNAc...) asparagine). Active-site residues include Asp-271 and His-305. N-linked (GlcNAc...) asparagine glycosylation is present at Asn-346.

Belongs to the AB hydrolase superfamily. Lipase family. Class Lip subfamily.

Its subcellular location is the secreted. It carries out the reaction a triacylglycerol + H2O = a diacylglycerol + a fatty acid + H(+). The enzyme catalyses a monoacylglycerol + H2O = glycerol + a fatty acid + H(+). It catalyses the reaction a diacylglycerol + H2O = a monoacylglycerol + a fatty acid + H(+). In terms of biological role, secreted lipase that hydrolyzes acylglycerol lipids such as triacylglycerols and consequently releases free fatty acid. Can hydrolyze 4-nitrophenyl palmitate to release 4-nitrophenol and palmitoic acid. Due to an absence of fatty acid synthase genes in Malassezia species, secretory lipases are essential for the yeast to generate free fatty acids from degradation of sebum and assimilate them as lipid sources for growth. Plays important roles not only in lipid metabolism but also in the immune response of host cells and pathogenesis. The protein is Secreted triacylglycerol lipase LIP5 of Malassezia furfur (Pityriasis versicolor infection agent).